We begin with the raw amino-acid sequence, 740 residues long: UvrABC system protein B (740 aa).

The interval 1-36 (MTIAIRTTLDEPENHSDFVPHRPSRPEKTEPSKPFR) is disordered. Over residues 8 to 33 (TLDEPENHSDFVPHRPSRPEKTEPSK) the composition is skewed to basic and acidic residues. Residues 56–444 (KDIQKGERDQ…GGVFVEQIIR (389 aa)) enclose the Helicase ATP-binding domain. 69 to 76 (GVTGSGKT) is an ATP binding site. Positions 122 to 145 (YYDYYQPEAYVPRTDTYIEKDSAI) match the Beta-hairpin motif. One can recognise a Helicase C-terminal domain in the interval 461 to 627 (QVDNLIFEAK…TVKRQVDDIV (167 aa)). The UVR domain maps to 651–686 (ARSISETEKEMLEAAANLEFEKAAQLRDVLHQLKRQ). The disordered stretch occupies residues 687–740 (ELGLPPEKSSEIQGRSEAGRPGTRKTRSDKAREAKASKRVKQEAGEKLLRSRGH). Residues 712–740 (TRSDKAREAKASKRVKQEAGEKLLRSRGH) are compositionally biased toward basic and acidic residues.

Belongs to the UvrB family. In terms of assembly, forms a heterotetramer with UvrA during the search for lesions. Interacts with UvrC in an incision complex.

It localises to the cytoplasm. Its function is as follows. The UvrABC repair system catalyzes the recognition and processing of DNA lesions. A damage recognition complex composed of 2 UvrA and 2 UvrB subunits scans DNA for abnormalities. Upon binding of the UvrA(2)B(2) complex to a putative damaged site, the DNA wraps around one UvrB monomer. DNA wrap is dependent on ATP binding by UvrB and probably causes local melting of the DNA helix, facilitating insertion of UvrB beta-hairpin between the DNA strands. Then UvrB probes one DNA strand for the presence of a lesion. If a lesion is found the UvrA subunits dissociate and the UvrB-DNA preincision complex is formed. This complex is subsequently bound by UvrC and the second UvrB is released. If no lesion is found, the DNA wraps around the other UvrB subunit that will check the other stand for damage. This Zymomonas mobilis subsp. mobilis (strain ATCC 31821 / ZM4 / CP4) protein is UvrABC system protein B.